The sequence spans 238 residues: SPbeta prophage-derived uncharacterized protein YorM (238 aa).

Positions 1–37 (MFKKLIDKHKKYVYHRINKMALFATIGLLGVGLVYSA) are cleaved as a signal peptide. A compositionally biased stretch (basic residues) spans 111–121 (TKTKKVQKTNT). The tract at residues 111-132 (TKTKKVQKTNTKRNLDKAVSKS) is disordered.

This Bacillus subtilis (strain 168) protein is SPbeta prophage-derived uncharacterized protein YorM (yorM).